Reading from the N-terminus, the 450-residue chain is tRNA-2-methylthio-N(6)-dimethylallyladenosine synthase (450 aa).

An MTTase N-terminal domain is found at 7 to 127; that stretch reads KKVFIKTYGC…LPDVLARVRG (121 aa). Residues C16, C52, C90, C168, C172, and C175 each contribute to the [4Fe-4S] cluster site. Positions 154 to 388 constitute a Radical SAM core domain; it reads IKRGVTAFLT…LLLKQQQGFG (235 aa). A TRAM domain is found at 389–450; that stretch reads SSLVGSTIDT…GYNSLFAELA (62 aa).

This sequence belongs to the methylthiotransferase family. MiaB subfamily. As to quaternary structure, monomer. The cofactor is [4Fe-4S] cluster.

It is found in the cytoplasm. The enzyme catalyses N(6)-dimethylallyladenosine(37) in tRNA + (sulfur carrier)-SH + AH2 + 2 S-adenosyl-L-methionine = 2-methylsulfanyl-N(6)-dimethylallyladenosine(37) in tRNA + (sulfur carrier)-H + 5'-deoxyadenosine + L-methionine + A + S-adenosyl-L-homocysteine + 2 H(+). Catalyzes the methylthiolation of N6-(dimethylallyl)adenosine (i(6)A), leading to the formation of 2-methylthio-N6-(dimethylallyl)adenosine (ms(2)i(6)A) at position 37 in tRNAs that read codons beginning with uridine. The polypeptide is tRNA-2-methylthio-N(6)-dimethylallyladenosine synthase (Mesorhizobium japonicum (strain LMG 29417 / CECT 9101 / MAFF 303099) (Mesorhizobium loti (strain MAFF 303099))).